Consider the following 280-residue polypeptide: Ribosomal RNA small subunit methyltransferase A (280 aa).

Positions 15, 17, 42, 64, 89, and 109 each coordinate S-adenosyl-L-methionine.

The protein belongs to the class I-like SAM-binding methyltransferase superfamily. rRNA adenine N(6)-methyltransferase family. RsmA subfamily.

It is found in the cytoplasm. The catalysed reaction is adenosine(1518)/adenosine(1519) in 16S rRNA + 4 S-adenosyl-L-methionine = N(6)-dimethyladenosine(1518)/N(6)-dimethyladenosine(1519) in 16S rRNA + 4 S-adenosyl-L-homocysteine + 4 H(+). Functionally, specifically dimethylates two adjacent adenosines (A1518 and A1519) in the loop of a conserved hairpin near the 3'-end of 16S rRNA in the 30S particle. May play a critical role in biogenesis of 30S subunits. In Prochlorococcus marinus (strain MIT 9303), this protein is Ribosomal RNA small subunit methyltransferase A.